A 228-amino-acid chain; its full sequence is Prolactin (228 aa).

An N-terminal signal peptide occupies residues 1 to 29 (MGTKRSSLKGSLLLLLLMSSLFLFKSVES). Residues cysteine 33 and cysteine 40 are joined by a disulfide bond. Phosphoserine is present on residues serine 55, serine 63, and serine 119. 2 cysteine pairs are disulfide-bonded: cysteine 87–cysteine 203 and cysteine 220–cysteine 228.

Belongs to the somatotropin/prolactin family. As to quaternary structure, interacts with PRLR.

The protein localises to the secreted. Prolactin acts primarily on the mammary gland by promoting lactation, mammogenesis, mitogenesis and osmoregulation. The protein is Prolactin (PRL) of Trichosurus vulpecula (Brush-tailed possum).